Reading from the N-terminus, the 110-residue chain is Small ribosomal subunit protein bS16 (110 aa).

Positions 79 to 110 are disordered; it reads AAGVKKREARNNPQKAVPRKERKAQAEAAAKG.

The protein belongs to the bacterial ribosomal protein bS16 family.

In Bradyrhizobium diazoefficiens (strain JCM 10833 / BCRC 13528 / IAM 13628 / NBRC 14792 / USDA 110), this protein is Small ribosomal subunit protein bS16.